A 337-amino-acid chain; its full sequence is Tetraacyldisaccharide 4'-kinase (337 aa).

Residue 52 to 59 (TLGGAGKT) coordinates ATP.

Belongs to the LpxK family.

The enzyme catalyses a lipid A disaccharide + ATP = a lipid IVA + ADP + H(+). Its pathway is glycolipid biosynthesis; lipid IV(A) biosynthesis; lipid IV(A) from (3R)-3-hydroxytetradecanoyl-[acyl-carrier-protein] and UDP-N-acetyl-alpha-D-glucosamine: step 6/6. Functionally, transfers the gamma-phosphate of ATP to the 4'-position of a tetraacyldisaccharide 1-phosphate intermediate (termed DS-1-P) to form tetraacyldisaccharide 1,4'-bis-phosphate (lipid IVA). In Methylobacterium nodulans (strain LMG 21967 / CNCM I-2342 / ORS 2060), this protein is Tetraacyldisaccharide 4'-kinase.